The following is a 361-amino-acid chain: Septin-2 (361 aa).

A Phosphotyrosine modification is found at Y17. Residues 34 to 306 form the Septin-type G domain; that stretch reads KGFEFTLMVV…ENFRSERLKR (273 aa). The G1 motif stretch occupies residues 44-51; that stretch reads GESGLGKS. Residues 44–51, T78, G104, and 183–191 each bind GTP; these read GESGLGKS and KADTLTLKE. The interval 101–104 is G3 motif; that stretch reads DTPG. Residues 182-185 are G4 motif; sequence AKAD. At K190 the chain carries N6-acetyllysine. Y211 carries the post-translational modification Phosphotyrosine. S218 is subject to Phosphoserine. Residues G241 and R256 each coordinate GTP. The segment at 260-270 is important for dimerization; that stretch reads WGVVEVENPEH.

This sequence belongs to the TRAFAC class TrmE-Era-EngA-EngB-Septin-like GTPase superfamily. Septin GTPase family. As to quaternary structure, septins polymerize into heterooligomeric protein complexes that form filaments, and associate with cellular membranes, actin filaments and microtubules. GTPase activity is required for filament formation. Filaments are assembled from asymmetrical heterotrimers, composed of SEPTIN2, SEPTIN6 and SEPTIN7 that associate head-to-head to form a hexameric unit. Interaction between SEPTIN2 and SEPTIN7 seems indirect. Interacts with SEPTIN5. Interaction with SEPTIN4 not detected. Interacts with SEPTIN9. Component of a septin core octameric complex consisting of SEPTIN12, SEPTIN7, SEPTIN6 and SEPTIN2 or SEPTIN4 in the order 12-7-6-2-2-6-7-12 or 12-7-6-4-4-6-7-12 and located in the sperm annulus. Interacts with MAP4. Interacts with DZIP1L.

Its subcellular location is the cytoplasm. The protein localises to the cytoskeleton. It localises to the spindle. The protein resides in the chromosome. It is found in the centromere. Its subcellular location is the kinetochore. The protein localises to the cleavage furrow. It localises to the midbody. The protein resides in the cell cortex. It is found in the cell projection. Its subcellular location is the cilium membrane. The protein localises to the cilium. It localises to the flagellum. Filament-forming cytoskeletal GTPase. Forms a filamentous structure with SEPTIN12, SEPTIN6, SEPTIN2 and probably SEPTIN4 at the sperm annulus which is required for the structural integrity and motility of the sperm tail during postmeiotic differentiation. Required for normal organization of the actin cytoskeleton. Plays a role in the biogenesis of polarized columnar-shaped epithelium by maintaining polyglutamylated microtubules, thus facilitating efficient vesicle transport, and by impeding MAP4 binding to tubulin. Required for the progression through mitosis. Forms a scaffold at the midplane of the mitotic splindle required to maintain CENPE localization at kinetochores and consequently chromosome congression. During anaphase, may be required for chromosome segregation and spindle elongation. Plays a role in ciliogenesis and collective cell movements. In cilia, required for the integrity of the diffusion barrier at the base of the primary cilium that prevents diffusion of transmembrane proteins between the cilia and plasma membranes: probably acts by regulating the assembly of the tectonic-like complex (also named B9 complex) by localizing TMEM231 protein. The protein is Septin-2 of Bos taurus (Bovine).